We begin with the raw amino-acid sequence, 271 residues long: Aminoglycoside 3'-phosphotransferase (271 aa).

Asp198 acts as the Proton acceptor in catalysis.

Belongs to the aminoglycoside phosphotransferase family.

The enzyme catalyses kanamycin A + ATP = kanamycin 3'-phosphate + ADP + H(+). Resistance to kanamycin and structurally-related aminoglycosides, including amikacin. This chain is Aminoglycoside 3'-phosphotransferase, found in Salmonella typhimurium.